Consider the following 64-residue polypeptide: SPbeta prophage-derived uncharacterized protein YonP (64 aa).

The protein is SPbeta prophage-derived uncharacterized protein YonP (yonP) of Bacillus subtilis (strain 168).